A 247-amino-acid chain; its full sequence is 1-(5-phosphoribosyl)-5-[(5-phosphoribosylamino)methylideneamino] imidazole-4-carboxamide isomerase (247 aa).

The active-site Proton acceptor is the D8. Residue D131 is the Proton donor of the active site.

This sequence belongs to the HisA/HisF family.

It localises to the cytoplasm. It catalyses the reaction 1-(5-phospho-beta-D-ribosyl)-5-[(5-phospho-beta-D-ribosylamino)methylideneamino]imidazole-4-carboxamide = 5-[(5-phospho-1-deoxy-D-ribulos-1-ylimino)methylamino]-1-(5-phospho-beta-D-ribosyl)imidazole-4-carboxamide. It participates in amino-acid biosynthesis; L-histidine biosynthesis; L-histidine from 5-phospho-alpha-D-ribose 1-diphosphate: step 4/9. This is 1-(5-phosphoribosyl)-5-[(5-phosphoribosylamino)methylideneamino] imidazole-4-carboxamide isomerase from Ralstonia pickettii (strain 12J).